Here is a 212-residue protein sequence, read N- to C-terminus: Large ribosomal subunit protein uL3 (212 aa).

Glutamine 152 carries the post-translational modification N5-methylglutamine.

It belongs to the universal ribosomal protein uL3 family. Part of the 50S ribosomal subunit. Forms a cluster with proteins L14 and L19. In terms of processing, methylated by PrmB.

One of the primary rRNA binding proteins, it binds directly near the 3'-end of the 23S rRNA, where it nucleates assembly of the 50S subunit. The chain is Large ribosomal subunit protein uL3 from Chromohalobacter salexigens (strain ATCC BAA-138 / DSM 3043 / CIP 106854 / NCIMB 13768 / 1H11).